A 135-amino-acid polypeptide reads, in one-letter code: Sex-regulated protein janus-A (135 aa).

A substrate-binding site is contributed by Lys-37. The active-site Proton acceptor is the His-63. 104 to 106 (SQG) is a binding site for substrate.

Belongs to the janus family.

Functionally, janA and janB regulate somatic sex differentiation. This chain is Sex-regulated protein janus-A (janA), found in Drosophila orena (Fruit fly).